We begin with the raw amino-acid sequence, 455 residues long: Chromosomal replication initiator protein DnaA (455 aa).

The interval 1 to 73 is domain I, interacts with DnaA modulators; that stretch reads MTISPQYIWN…LEEVETIVGY (73 aa). A domain II region spans residues 73–114; it reads YPIAVKLTTSQEQNLRIVDKNKDNLSSTKLQNKRQQESPKLN. Residues 115–331 are domain III, AAA+ region; sequence QLNPRYNFSR…GALIRAVTYI (217 aa). Positions 159, 161, 162, and 163 each coordinate ATP. The tract at residues 332 to 455 is domain IV, binds dsDNA; it reads SISGLSMTVE…RINIASRNQN (124 aa).

Belongs to the DnaA family. As to quaternary structure, oligomerizes as a right-handed, spiral filament on DNA at oriC.

It is found in the cytoplasm. In terms of biological role, plays an essential role in the initiation and regulation of chromosomal replication. ATP-DnaA binds to the origin of replication (oriC) to initiate formation of the DNA replication initiation complex once per cell cycle. Binds the DnaA box (a 9 base pair repeat at the origin) and separates the double-stranded (ds)DNA. Forms a right-handed helical filament on oriC DNA; dsDNA binds to the exterior of the filament while single-stranded (ss)DNA is stabiized in the filament's interior. The ATP-DnaA-oriC complex binds and stabilizes one strand of the AT-rich DNA unwinding element (DUE), permitting loading of DNA polymerase. After initiation quickly degrades to an ADP-DnaA complex that is not apt for DNA replication. Binds acidic phospholipids. The chain is Chromosomal replication initiator protein DnaA from Crocosphaera subtropica (strain ATCC 51142 / BH68) (Cyanothece sp. (strain ATCC 51142)).